Here is an 887-residue protein sequence, read N- to C-terminus: MSGVNEIRSMFLDYFRKNGHEVVPSSPLVPRNDPTLMFTNAGMVQFKNVFTGLEQRPYSTAATAQKCVRAGGKHNDLDNVGYTARHHTFFEMLGNFSFGDYFKERAIELAWNLITKEYGLDAKRLLVTVYHTDDEAFGLWKKIAGLSDDRIIRIATSDNFWAMGDTGPCGPCSEIFYDHGDHIWGGPPGSADEDGDRFIEIWNLVFMQYEQITKEERVDLPRPSIDTGMGLERLAAVLQGQHDNYDIDLFRALIAASEEATGVKAEGDRRASHRVIADHLRSSAFLIADGVLPSNEGRGYVLRRIMRRAMRHAQLLGAQDPLMWKLLPALVGQMGRAYPELVRAEALISETLKLEETRFRKTLERGLNLLEEASADLSEGDQFNGETAFKLYDTYGFPLDLTQDALRAKGIGVDTDAFTAAMQRQKAEARANWTGSGDAATETIWFELRDKHGATDFLGYDTESAEGVIQAIVRDGTVVESASKGETVQLVLNQTPFYGESGGQVGDTGVVTTESGKLTVTDTQKRGEGLFVHYCVVEEGSVKTGEAAALAVDHARRTRLRANHSATHLLHEALREVLGTHVSQKGSLVAPERLRFDVSHPKPMTSEELKVVEEMANEIIVQNTPVVTRLMSVDDAIAEGAMALFGEKYGDEVRVVSMGQGLHGSKAGKAYSVELCGGTHVSATGDIGLVRIVSESAVGSGVRRVEALTGEAARAYLGEQDERVKALAAALKVQPSDVLGRVESLLDERRKLERELTEAKKKLALAGDGQNGSGEAAREIGGVRFLGRVVSGVEPKDLKSLADDGKKTLGSGVVAFVGVSGDGKASAVVAVTDDLTSKVSAVDLVRVASAALGGKGGGGRPDMAQAGGPDGGRAAEAIEAVAVALAG.

The Zn(2+) site is built by H564, H568, C676, and H680.

Belongs to the class-II aminoacyl-tRNA synthetase family. Zn(2+) serves as cofactor.

The protein resides in the cytoplasm. It carries out the reaction tRNA(Ala) + L-alanine + ATP = L-alanyl-tRNA(Ala) + AMP + diphosphate. Catalyzes the attachment of alanine to tRNA(Ala) in a two-step reaction: alanine is first activated by ATP to form Ala-AMP and then transferred to the acceptor end of tRNA(Ala). Also edits incorrectly charged Ser-tRNA(Ala) and Gly-tRNA(Ala) via its editing domain. In Sinorhizobium medicae (strain WSM419) (Ensifer medicae), this protein is Alanine--tRNA ligase.